A 304-amino-acid polypeptide reads, in one-letter code: Aspartate carbamoyltransferase catalytic subunit (304 aa).

Positions 56 and 57 each coordinate carbamoyl phosphate. L-aspartate is bound at residue Lys85. 3 residues coordinate carbamoyl phosphate: Arg106, His134, and Gln137. Arg167 and Arg226 together coordinate L-aspartate. Residues Leu265 and Pro266 each coordinate carbamoyl phosphate.

The protein belongs to the aspartate/ornithine carbamoyltransferase superfamily. ATCase family. In terms of assembly, heterooligomer of catalytic and regulatory chains.

It carries out the reaction carbamoyl phosphate + L-aspartate = N-carbamoyl-L-aspartate + phosphate + H(+). Its pathway is pyrimidine metabolism; UMP biosynthesis via de novo pathway; (S)-dihydroorotate from bicarbonate: step 2/3. Catalyzes the condensation of carbamoyl phosphate and aspartate to form carbamoyl aspartate and inorganic phosphate, the committed step in the de novo pyrimidine nucleotide biosynthesis pathway. The protein is Aspartate carbamoyltransferase catalytic subunit of Picrophilus torridus (strain ATCC 700027 / DSM 9790 / JCM 10055 / NBRC 100828 / KAW 2/3).